The sequence spans 79 residues: MDPPGYLLFLLLLPVAASQTSAGSCSGCGTLSLPLLAGLVAADAVMSLLIVGVVFVCMRPHGRPAQEDGRVYINMPGRG.

Positions 1-17 (MDPPGYLLFLLLLPVAA) are cleaved as a signal peptide. Topologically, residues 18-35 (SQTSAGSCSGCGTLSLPL) are extracellular. A helical transmembrane segment spans residues 36-56 (LAGLVAADAVMSLLIVGVVFV). Topologically, residues 57-79 (CMRPHGRPAQEDGRVYINMPGRG) are cytoplasmic. A Phosphotyrosine modification is found at Tyr-72. The GRB2 binding site stretch occupies residues 72-74 (YIN). Residues 72-75 (YINM) form a PIK3R1 binding site region.

This sequence belongs to the DAP10 family. In terms of assembly, homodimer; Disulfide-linked. Interacts with KLRK1 to form a stable complex, which results in surface expression of both proteins, whereas alone, it is minimally expressed. Interacts with PIK3R1 and GRB2. Interacts with CLEC5A. Forms an CLEC5A/TYROBP/HCST trimolecular complex depending almost solely on TYROBP. Heterohexamer composed of four subunits of HCST/DAP10 and two subunits of KLRK1. Interacts (via transmembrane domain) with KLRK1 isoform 1 (via transmembrane domain); the interaction is required for KLRK1 cell surface expression on naive NK cells and activated CD8(+) T-cells, but is dispensable on activated TYROBP-expressing NK cells. Interacts (via transmembrane domain) with KLRK1 isoform 2 (via transmembrane domain); the interaction is required for KLRK1 NK cell surface expression and induces NK cell-mediated cytotoxicity. Interacts with CD300H. In terms of processing, phosphorylated; PIK3R1 and GRB2 associate specifically with tyrosine-phosphorylated HCST. O-glycosylated.

It is found in the membrane. Its function is as follows. Transmembrane adapter protein which associates with KLRK1 to form an activation receptor KLRK1-HCST in lymphoid and myeloid cells; this receptor plays a major role in triggering cytotoxicity against target cells expressing cell surface ligands such as MHC class I chain-related MICA and MICB, and UL16-binding proteins (ULBPs); these ligands are up-regulated by stress conditions and pathological state such as viral infection and tumor transformation. Functions as a docking site for PI3-kinase PIK3R1 and GRB2. Interaction of ULBPs with KLRK1-HCST triggers calcium mobilization and activation of the PIK3R1, MAP2K/ERK, and JAK2/STAT5 signaling pathways. Both PIK3R1 and GRB2 are required for full KLRK1-HCST-mediated activation and ultimate killing of target cells. In NK cells, KLRK1-HCST signaling directly induces cytotoxicity and enhances cytokine production initiated via DAP12/TYROBP-associated receptors. In T-cells, it provides primarily costimulation for TCR-induced signals. KLRK1-HCST receptor plays a role in immune surveillance against tumors and is required for cytolysis of tumors cells; indeed, melanoma cells that do not express KLRK1 ligands escape from immune surveillance mediated by NK cells. This Mus musculus (Mouse) protein is Hematopoietic cell signal transducer (Hcst).